A 464-amino-acid polypeptide reads, in one-letter code: Cerebellar degeneration-related protein 2-like (464 aa).

3 coiled-coil regions span residues 31-154, 201-264, and 342-379; these read AAEL…RRKT, VSSL…KSRV, and MSIL…AEVQ. A disordered region spans residues 371–419; the sequence is ESLRHAEVQTSRPVSRDPSMKECRVAEPQQPPPTPPQTPSTPEALEGIS. Residues 384–395 are compositionally biased toward basic and acidic residues; sequence VSRDPSMKECRV. Positions 399-409 are enriched in pro residues; the sequence is QQPPPTPPQTP.

The protein belongs to the CDR2 family.

The sequence is that of Cerebellar degeneration-related protein 2-like (cdr2l) from Danio rerio (Zebrafish).